The sequence spans 897 residues: Macoilin (897 aa).

4 helical membrane passes run Ile-113–Ile-133, Gln-157–Ile-177, Pro-181–Pro-201, and Leu-204–Met-224. Polar residues-rich tracts occupy residues Ile-291 to Lys-304 and Gly-329 to Pro-338. Residues Ile-291–Gln-375 form a disordered region. The span at Asp-351–Asp-361 shows a compositional bias: acidic residues. Residues Gly-379 to Phe-399 form a helical membrane-spanning segment. A compositionally biased stretch (polar residues) spans Thr-403–Gln-413. Disordered stretches follow at residues Thr-403–Asp-535 and Asn-724–Pro-770. Acidic residues predominate over residues Ile-414–Asp-424. A compositionally biased stretch (polar residues) spans Thr-432–Arg-451. Low complexity-rich tracts occupy residues Ser-452 to Gly-467 and Ser-475 to His-490. A coiled-coil region spans residues Asp-503 to Ser-726. Residues Thr-510 to Asp-535 are compositionally biased toward basic and acidic residues. Residues Glu-734 to Gln-761 are compositionally biased toward polar residues.

Strong expression in many neurons, very weak expression is also detected in others tissues.

The protein resides in the rough endoplasmic reticulum membrane. It is found in the nucleus membrane. Its function is as follows. Plays a role in the regulation of neuronal activity. In AWA and AWC neurons, plays a role in regulating olfactory adaptation by controlling the forgetting sensory responses to odorants such as diacetyl and isoamyl alcohol. May play a role in regulating daf-7 expression in ASI neurons in response to bacterial small RNAs. In ASI neurons, promotes dauer formation in response to pheromones such as the ascarosides ascr#2 and ascr#3. In Caenorhabditis elegans, this protein is Macoilin.